We begin with the raw amino-acid sequence, 438 residues long: MVNKMKWRRTHYSADIKPEMDGQEVIIMGWVHSIRALGKIIFVILRDREGTVQIVAPKQKVGDELFSQIKKLGAEDVIAVKGKVIANEKAPNGFEILPLELEVINTAKRPLPLDPAEKVPAELDTRLENRFLDLRRPKVQAIFKIRSEMLKSVRNTLYNEGFIEVNTPKLVASCTEGGTELFPISYFEREAFLGQSPQLYKQMLMATGLDRVFEIAPIFRAEEHNTRRHLNEATSIDIEMAFADDKDAMDILEKVVYNAFVDVYENRKKEIETLGIEFELPPEKFDRITYDEAIDIANAKGVEISWGEDLSREAEKAIGEEMEGLYFITDWPSEIRPFYTMPDEKNPNICKAFDLMYKDLEISSGAQRIHLYDLLVENIKKKGLNPDGFTYYLEAFKYGMPPHAGWGLGADRFTMVLTQQENIRECVLFPRDRQRLTP.

Glu176 contributes to the L-aspartate binding site. Residues 198–201 (QLYK) are aspartate. Position 220 (Arg220) interacts with L-aspartate. ATP-binding positions include 220 to 222 (RAE), 228 to 230 (RHL), and Glu361. Residues Glu361 and Ser364 each contribute to the Mg(2+) site. L-aspartate is bound by residues Ser364 and Arg368. 409–412 (GADR) provides a ligand contact to ATP.

Belongs to the class-II aminoacyl-tRNA synthetase family. Type 2 subfamily. Homodimer. Mg(2+) serves as cofactor.

Its subcellular location is the cytoplasm. The catalysed reaction is tRNA(Asx) + L-aspartate + ATP = L-aspartyl-tRNA(Asx) + AMP + diphosphate. In terms of biological role, aspartyl-tRNA synthetase with relaxed tRNA specificity since it is able to aspartylate not only its cognate tRNA(Asp) but also tRNA(Asn). Reaction proceeds in two steps: L-aspartate is first activated by ATP to form Asp-AMP and then transferred to the acceptor end of tRNA(Asp/Asn). The sequence is that of Aspartate--tRNA(Asp/Asn) ligase from Methanocaldococcus jannaschii (strain ATCC 43067 / DSM 2661 / JAL-1 / JCM 10045 / NBRC 100440) (Methanococcus jannaschii).